Reading from the N-terminus, the 295-residue chain is MKIAILSRNSKLYSTRRLIEAGRKRGHTVRILDPLRCYMRIAADGFSLHYKGKPITGFDAVIPRIGASVTRYGTAVLRQLEFMGTYTPNPSDAILRARDKLRAHQLLAAQGIDMPVTVFGDNPDDTQDLLSMLGPPPHVVKLNEGAQGAGVILTEKASASRSVVEALRGLYANFIVQEFIGEAEGADLRCFVVGDRVVAAMRRQAAEGDFRSNLHLGGTAVVADATELEREVAVRSARALGLAVAGVDLIRSKRGPLVLEVNSTPGLEGVEGVCGVDVAGAIVQHLEQSVRRSAD.

The ATP-grasp domain maps to His104–Glu287. Residues Lys141, Glu178–Phe179, Asp187, and Arg211–Asn213 contribute to the ATP site. 3 residues coordinate Mg(2+): Asp248, Glu260, and Asn262. Residues Asp248, Glu260, and Asn262 each contribute to the Mn(2+) site.

The protein belongs to the RimK family. Mg(2+) serves as cofactor. It depends on Mn(2+) as a cofactor.

This Xanthomonas oryzae pv. oryzae (strain MAFF 311018) protein is Probable alpha-L-glutamate ligase.